We begin with the raw amino-acid sequence, 276 residues long: Large ribosomal subunit protein uL2 (276 aa).

Residues 219 to 268 are disordered; sequence TVRGSVMNPNDHPHGGGEGRQPVGRKSPMTPWGKPALGLKTRNKKAKSSK.

The protein belongs to the universal ribosomal protein uL2 family. As to quaternary structure, part of the 50S ribosomal subunit. Forms a bridge to the 30S subunit in the 70S ribosome.

One of the primary rRNA binding proteins. Required for association of the 30S and 50S subunits to form the 70S ribosome, for tRNA binding and peptide bond formation. It has been suggested to have peptidyltransferase activity; this is somewhat controversial. Makes several contacts with the 16S rRNA in the 70S ribosome. This Lactococcus lactis subsp. lactis (strain IL1403) (Streptococcus lactis) protein is Large ribosomal subunit protein uL2.